Here is a 417-residue protein sequence, read N- to C-terminus: Voltage-gated ClC-type chloride channel ClcB (417 aa).

Transmembrane regions (helical) follow at residues 5–25 (LLIA…FRHA), 54–74 (LITP…WQKM), 146–166 (LWIA…PLAG), 168–188 (LFIA…PVVV), 222–242 (VMIV…MWLM), 258–278 (WQLA…PTVW), 288–308 (FLLS…KILA), 316–336 (GAPG…GMFL), 349–371 (EIAI…HAPI), and 380–400 (MTGE…ASVL).

The protein belongs to the chloride channel (TC 2.A.49) family. ClcB subfamily.

It localises to the cell inner membrane. Functionally, probably acts as an electrical shunt for an outwardly-directed proton pump that is linked to amino acid decarboxylation, as part of the extreme acid resistance (XAR) response. In Salmonella dublin (strain CT_02021853), this protein is Voltage-gated ClC-type chloride channel ClcB.